Reading from the N-terminus, the 89-residue chain is Elongation factor 1-beta (89 aa).

The protein belongs to the EF-1-beta/EF-1-delta family.

Promotes the exchange of GDP for GTP in EF-1-alpha/GDP, thus allowing the regeneration of EF-1-alpha/GTP that could then be used to form the ternary complex EF-1-alpha/GTP/AAtRNA. In Methanosarcina mazei (strain ATCC BAA-159 / DSM 3647 / Goe1 / Go1 / JCM 11833 / OCM 88) (Methanosarcina frisia), this protein is Elongation factor 1-beta.